Consider the following 113-residue polypeptide: Large ribosomal subunit protein uL24 (113 aa).

Residues 48-70 (HRKRVTNDKGTSSGGLEKRESPM) form a disordered region.

Belongs to the universal ribosomal protein uL24 family. In terms of assembly, part of the 50S ribosomal subunit.

One of two assembly initiator proteins, it binds directly to the 5'-end of the 23S rRNA, where it nucleates assembly of the 50S subunit. Functionally, one of the proteins that surrounds the polypeptide exit tunnel on the outside of the subunit. In Tropheryma whipplei (strain TW08/27) (Whipple's bacillus), this protein is Large ribosomal subunit protein uL24.